Reading from the N-terminus, the 794-residue chain is Ent-kaurene synthase 1, chloroplastic (794 aa).

The N-terminal 28 residues, 1-28, are a transit peptide targeting the chloroplast; the sequence is MSLLLSNSVLVGPKFRSSRISHASASLD. The Mg(2+) site is built by aspartate 543, aspartate 547, asparagine 687, and glutamate 695. A DDXXD motif motif is present at residues 543-547; that stretch reads DDFFD.

The protein belongs to the terpene synthase family. The cofactor is Mg(2+). As to expression, accumulates in leaves, and, at low levels, in germinating seeds.

The protein resides in the plastid. It is found in the chloroplast. It catalyses the reaction ent-copalyl diphosphate = ent-kaur-16-ene + diphosphate. It participates in secondary metabolite biosynthesis; terpenoid biosynthesis. It functions in the pathway plant hormone biosynthesis; gibberellin biosynthesis. Involved in the biosynthesis of ent-kaurene diterpenoids natural products such as oridonin, miltiradiene, eriocalyxin B and nezukol, known to exhibit antitumor, anti-inflammatory and antibacterial activities, and in the production of gibberellins phytohormones. Catalyzes the conversion of ent-copalyl diphosphate (ent-CPP) to ent-kaurene. The chain is Ent-kaurene synthase 1, chloroplastic from Isodon eriocalyx (Plectranthus eriocalyx).